The sequence spans 328 residues: WUSCHEL-related homeobox 6 (328 aa).

Residues 1-11 show a composition bias toward polar residues; sequence MEGSSNSPDRQ. The interval 1 to 45 is disordered; sequence MEGSSNSPDRQSSGGSPPEERGGGGSGGGGGRSAAGEPVRSRWTP. The span at 23–33 shows a compositional bias: gly residues; that stretch reads GGGSGGGGGRS. A DNA-binding region (homeobox; WUS-type) is located at residues 38–102; it reads PVRSRWTPKP…NRRSRSRRRQ (65 aa).

Belongs to the WUS homeobox family.

It is found in the nucleus. Transcription factor which may be involved in developmental processes. The sequence is that of WUSCHEL-related homeobox 6 (WOX6) from Oryza sativa subsp. japonica (Rice).